Reading from the N-terminus, the 250-residue chain is MLLIPAIDLKDGQCVRLKQGDMDQATIFSEEPAAMARHWVDRGARRLHLVDLNGAFAGKPKNEDAIRAIIAEVGGEIPVQLGGGIRDLNTIERYLDDGLSYVIIGTAAVKNPGFLQDACTAFGGHIIVGLDAKDGKVATDGWSKLTGHEVADLARKFEDYGCESIIYTDIGRDGMLQGINIEATVRLARAVKIPVIASGGLSNLADIESLCEVEDEGIEGVICGRAIYSGDLDFAAAQTLADRLRESDDA.

The active-site Proton acceptor is aspartate 8. The active-site Proton donor is aspartate 131.

It belongs to the HisA/HisF family.

It is found in the cytoplasm. It catalyses the reaction 1-(5-phospho-beta-D-ribosyl)-5-[(5-phospho-beta-D-ribosylamino)methylideneamino]imidazole-4-carboxamide = 5-[(5-phospho-1-deoxy-D-ribulos-1-ylimino)methylamino]-1-(5-phospho-beta-D-ribosyl)imidazole-4-carboxamide. It functions in the pathway amino-acid biosynthesis; L-histidine biosynthesis; L-histidine from 5-phospho-alpha-D-ribose 1-diphosphate: step 4/9. This chain is 1-(5-phosphoribosyl)-5-[(5-phosphoribosylamino)methylideneamino] imidazole-4-carboxamide isomerase, found in Paraburkholderia xenovorans (strain LB400).